We begin with the raw amino-acid sequence, 428 residues long: tRNA(Ile)-lysidine synthase (428 aa).

28–33 (SGGVDS) serves as a coordination point for ATP.

This sequence belongs to the tRNA(Ile)-lysidine synthase family.

The protein localises to the cytoplasm. It catalyses the reaction cytidine(34) in tRNA(Ile2) + L-lysine + ATP = lysidine(34) in tRNA(Ile2) + AMP + diphosphate + H(+). Its function is as follows. Ligates lysine onto the cytidine present at position 34 of the AUA codon-specific tRNA(Ile) that contains the anticodon CAU, in an ATP-dependent manner. Cytidine is converted to lysidine, thus changing the amino acid specificity of the tRNA from methionine to isoleucine. The chain is tRNA(Ile)-lysidine synthase from Streptococcus pyogenes serotype M18 (strain MGAS8232).